Consider the following 264-residue polypeptide: Apolipoprotein A-I (264 aa).

Residues 1–18 form the signal peptide; that stretch reads MKAVLLVVAALFLAGSQA. A run of 2 repeats spans residues 67-88 and 89-110. Positions 67-264 are 10 X approximate tandem repeats; it reads LRLSDNWDTL…DQASKQLAAQ (198 aa). Residues 111-121 form a 3; half-length repeat; that stretch reads EDLQDVKHKVQ. 3 repeat units span residues 122 to 143, 144 to 165, and 166 to 187. A 7; truncated repeat occupies 188–207; sequence PFSEEMRQRLAKRLEELKDS. The residue at position 193 (Met-193) is a Methionine sulfoxide. Repeat unit 8 spans residues 208–229; that stretch reads ATLADYHAKASEHLKMLGEKAK. Residues 230–240 form a 9; half-length repeat; the sequence is PALEDLRQGLL. Copy 10 of the repeat occupies 241 to 264; sequence PVLENLKASILSSIDQASKQLAAQ.

This sequence belongs to the apolipoprotein A1/A4/E family. In terms of assembly, homodimer. Interacts with APOA1BP and CLU. Component of a sperm activating protein complex (SPAP), consisting of APOA1, an immunoglobulin heavy chain, an immunoglobulin light chain and albumin. Interacts with NDRG1. Interacts with SCGB3A2. Interacts with NAXE and YJEFN3. In terms of processing, glycosylated. Post-translationally, palmitoylated. Phosphorylation sites are present in the extracellular medium.

The protein localises to the secreted. In terms of biological role, participates in the reverse transport of cholesterol from tissues to the liver for excretion by promoting cholesterol efflux from tissues and by acting as a cofactor for the lecithin cholesterol acyltransferase (LCAT). As part of the SPAP complex, activates spermatozoa motility. In Cavia aperea (Brazilian guinea pig), this protein is Apolipoprotein A-I (APOA1).